The sequence spans 148 residues: SsrA-binding protein (148 aa).

The disordered stretch occupies residues 129–148 (ETEKDRDWQREKARLMREKA).

Belongs to the SmpB family.

It is found in the cytoplasm. In terms of biological role, required for rescue of stalled ribosomes mediated by trans-translation. Binds to transfer-messenger RNA (tmRNA), required for stable association of tmRNA with ribosomes. tmRNA and SmpB together mimic tRNA shape, replacing the anticodon stem-loop with SmpB. tmRNA is encoded by the ssrA gene; the 2 termini fold to resemble tRNA(Ala) and it encodes a 'tag peptide', a short internal open reading frame. During trans-translation Ala-aminoacylated tmRNA acts like a tRNA, entering the A-site of stalled ribosomes, displacing the stalled mRNA. The ribosome then switches to translate the ORF on the tmRNA; the nascent peptide is terminated with the 'tag peptide' encoded by the tmRNA and targeted for degradation. The ribosome is freed to recommence translation, which seems to be the essential function of trans-translation. In Ralstonia nicotianae (strain ATCC BAA-1114 / GMI1000) (Ralstonia solanacearum), this protein is SsrA-binding protein.